Consider the following 215-residue polypeptide: UPF0502 protein Shal_1801 (215 aa).

This sequence belongs to the UPF0502 family.

This chain is UPF0502 protein Shal_1801, found in Shewanella halifaxensis (strain HAW-EB4).